We begin with the raw amino-acid sequence, 132 residues long: Small ribosomal subunit protein uS8 (132 aa).

Belongs to the universal ribosomal protein uS8 family. In terms of assembly, part of the 30S ribosomal subunit. Contacts proteins S5 and S12.

Its function is as follows. One of the primary rRNA binding proteins, it binds directly to 16S rRNA central domain where it helps coordinate assembly of the platform of the 30S subunit. The protein is Small ribosomal subunit protein uS8 of Bacillus velezensis (strain DSM 23117 / BGSC 10A6 / LMG 26770 / FZB42) (Bacillus amyloliquefaciens subsp. plantarum).